The following is a 279-amino-acid chain: Acetyl-coenzyme A carboxylase carboxyl transferase subunit beta (279 aa).

The CoA carboxyltransferase N-terminal domain occupies 23-279 (LWWKCEECGA…IVRLAGMLKV (257 aa)). The Zn(2+) site is built by cysteine 27, cysteine 30, cysteine 46, and cysteine 49. Residues 27–49 (CEECGAMIHKKQLEDHVYTCSDC) form a C4-type zinc finger.

This sequence belongs to the AccD/PCCB family. As to quaternary structure, acetyl-CoA carboxylase is a heterohexamer composed of biotin carboxyl carrier protein (AccB), biotin carboxylase (AccC) and two subunits each of ACCase subunit alpha (AccA) and ACCase subunit beta (AccD). The cofactor is Zn(2+).

It localises to the cytoplasm. The enzyme catalyses N(6)-carboxybiotinyl-L-lysyl-[protein] + acetyl-CoA = N(6)-biotinyl-L-lysyl-[protein] + malonyl-CoA. The protein operates within lipid metabolism; malonyl-CoA biosynthesis; malonyl-CoA from acetyl-CoA: step 1/1. In terms of biological role, component of the acetyl coenzyme A carboxylase (ACC) complex. Biotin carboxylase (BC) catalyzes the carboxylation of biotin on its carrier protein (BCCP) and then the CO(2) group is transferred by the transcarboxylase to acetyl-CoA to form malonyl-CoA. This chain is Acetyl-coenzyme A carboxylase carboxyl transferase subunit beta, found in Chlorobium limicola (strain DSM 245 / NBRC 103803 / 6330).